The primary structure comprises 1799 residues: 1,3-beta-glucan synthase component FKS1 (1799 aa).

Pro residues predominate over residues methionine 1 to lysine 11. Residues methionine 1–proline 136 are disordered. Residues glycine 12–proline 23 are compositionally biased toward low complexity. A compositionally biased stretch (gly residues) spans glycine 51–glycine 64. Over residues alanine 91–proline 101 the composition is skewed to polar residues. Transmembrane regions (helical) follow at residues isoleucine 431 to tyrosine 451, leucine 470 to isoleucine 490, leucine 504 to phenylalanine 524, valine 530 to alanine 550, phenylalanine 591 to leucine 611, valine 648 to tryptophan 668, asparagine 1268 to leucine 1288, cysteine 1323 to leucine 1343, leucine 1422 to isoleucine 1442, glycine 1446 to isoleucine 1466, isoleucine 1527 to isoleucine 1547, isoleucine 1563 to leucine 1583, alanine 1605 to leucine 1625, leucine 1635 to phenylalanine 1655, aspartate 1704 to phenylalanine 1724, and glycine 1762 to phenylalanine 1782.

Belongs to the glycosyltransferase 48 family. As to quaternary structure, component of the 1,3-beta-glucan synthase (GS) complex composed of a catalytic subunit FKS1 and a regulatory subunit RHO1.

The protein localises to the cell membrane. It catalyses the reaction [(1-&gt;3)-beta-D-glucosyl](n) + UDP-alpha-D-glucose = [(1-&gt;3)-beta-D-glucosyl](n+1) + UDP + H(+). Activated by magnesium ions. Inhibited by caspofungin and cilofungin. Functionally, catalytic subunit of the 1,3-beta-glucan synthase (GS) complex. Synthesizes 1,3-beta-glucan, a major structural component of the yeast cell wall. Involved in cell wall synthesis, maintenance and remodeling. The protein is 1,3-beta-glucan synthase component FKS1 of Cryptococcus neoformans var. grubii serotype A (strain H99 / ATCC 208821 / CBS 10515 / FGSC 9487) (Filobasidiella neoformans var. grubii).